Here is a 772-residue protein sequence, read N- to C-terminus: Probable adenosine deaminase (772 aa).

Residues His22 and His24 each coordinate Zn(2+). His24, Asp26, and Gly180 together coordinate substrate. His207 is a Zn(2+) binding site. Residue Glu210 is the Proton donor of the active site. Asp288 provides a ligand contact to Zn(2+).

This sequence belongs to the metallo-dependent hydrolases superfamily. Adenosine and AMP deaminases family. The cofactor is Zn(2+).

The enzyme catalyses adenosine + H2O + H(+) = inosine + NH4(+). Functionally, catalyzes the hydrolytic deamination of adenosine. Plays an important role in purine metabolism and in adenosine homeostasis, and may thereby contribute to cellular signaling events. This is Probable adenosine deaminase (ada) from Dictyostelium discoideum (Social amoeba).